Here is a 211-residue protein sequence, read N- to C-terminus: SOSS complex subunit B2 (211 aa).

Positions 27–97 (IVLEIGRVTK…TLYTGRGGDL (71 aa)) form a DNA-binding region, OB. Residues 125 to 211 (NQQNKTSKEQ…GRDPRRASKR (87 aa)) form a disordered region. The segment covering 136–157 (GNSPPNQNAGNGTVPVFSNNNA) has biased composition (polar residues). Positions 179 to 195 (NGPPPVTAGGTPAPPKP) are enriched in pro residues.

It belongs to the SOSS-B family. SOSS-B2 subfamily. As to quaternary structure, component of the SOSS complex, composed of soss-b (soss-b1/nabp2 or soss-b2/nabp1), soss-a/ints3 and soss-c/inip. SOSS complexes containing soss-b1/nabp2 are more abundant than complexes containing soss-b2/nabp1.

It is found in the nucleus. Its function is as follows. Component of the SOSS complex, a multiprotein complex that functions downstream of the MRN complex to promote DNA repair and G2/M checkpoint. In the SOSS complex, acts as a sensor of single-stranded DNA that binds to single-stranded DNA. The SOSS complex associates with DNA lesions and influences diverse endpoints in the cellular DNA damage response including cell-cycle checkpoint activation, recombinational repair and maintenance of genomic stability. Required for efficient homologous recombination-dependent repair of double-strand breaks (DSBs). This is SOSS complex subunit B2 (nabp1) from Danio rerio (Zebrafish).